The primary structure comprises 207 residues: Large ribosomal subunit protein uL4 (207 aa).

Residues 45 to 80 (RQGTHAVKNRSEVRGGGRKPWRQKGTGRARQGSTRS) are disordered. The segment covering 60–71 (GGRKPWRQKGTG) has biased composition (basic residues).

The protein belongs to the universal ribosomal protein uL4 family. In terms of assembly, part of the 50S ribosomal subunit.

Functionally, one of the primary rRNA binding proteins, this protein initially binds near the 5'-end of the 23S rRNA. It is important during the early stages of 50S assembly. It makes multiple contacts with different domains of the 23S rRNA in the assembled 50S subunit and ribosome. Its function is as follows. Forms part of the polypeptide exit tunnel. This is Large ribosomal subunit protein uL4 from Oceanobacillus iheyensis (strain DSM 14371 / CIP 107618 / JCM 11309 / KCTC 3954 / HTE831).